The primary structure comprises 257 residues: Imidazole glycerol phosphate synthase subunit HisF (257 aa).

Active-site residues include aspartate 11 and aspartate 130.

It belongs to the HisA/HisF family. In terms of assembly, heterodimer of HisH and HisF.

It is found in the cytoplasm. It carries out the reaction 5-[(5-phospho-1-deoxy-D-ribulos-1-ylimino)methylamino]-1-(5-phospho-beta-D-ribosyl)imidazole-4-carboxamide + L-glutamine = D-erythro-1-(imidazol-4-yl)glycerol 3-phosphate + 5-amino-1-(5-phospho-beta-D-ribosyl)imidazole-4-carboxamide + L-glutamate + H(+). It functions in the pathway amino-acid biosynthesis; L-histidine biosynthesis; L-histidine from 5-phospho-alpha-D-ribose 1-diphosphate: step 5/9. Functionally, IGPS catalyzes the conversion of PRFAR and glutamine to IGP, AICAR and glutamate. The HisF subunit catalyzes the cyclization activity that produces IGP and AICAR from PRFAR using the ammonia provided by the HisH subunit. The protein is Imidazole glycerol phosphate synthase subunit HisF of Trichormus variabilis (strain ATCC 29413 / PCC 7937) (Anabaena variabilis).